Here is a 157-residue protein sequence, read N- to C-terminus: Phosphopantetheine adenylyltransferase (157 aa).

Substrate is bound at residue S9. Residues 9 to 10 (SF) and H17 each bind ATP. Substrate-binding residues include K41, L73, and K87. ATP is bound by residues 88-90 (GLR), E98, and 123-129 (YSYLSSS).

The protein belongs to the bacterial CoaD family. As to quaternary structure, homohexamer. The cofactor is Mg(2+).

The protein resides in the cytoplasm. It carries out the reaction (R)-4'-phosphopantetheine + ATP + H(+) = 3'-dephospho-CoA + diphosphate. It participates in cofactor biosynthesis; coenzyme A biosynthesis; CoA from (R)-pantothenate: step 4/5. In terms of biological role, reversibly transfers an adenylyl group from ATP to 4'-phosphopantetheine, yielding dephospho-CoA (dPCoA) and pyrophosphate. This chain is Phosphopantetheine adenylyltransferase, found in Alkaliphilus metalliredigens (strain QYMF).